The sequence spans 1391 residues: Eukaryotic translation initiation factor 3 subunit A (1391 aa).

The PCI domain occupies 315–498; it reads MQRMSTRVLL…RTLSFGSDLN (184 aa). Composition is skewed to basic and acidic residues over residues 809–921, 940–959, 966–1234, 1246–1257, 1265–1307, and 1313–1380; these read DKEE…RGGP, AALR…EKVS, EKGG…RDQT, GWREREKAREDS, QAPE…ETPR, and DSDR…IKPE. A disordered region spans residues 809 to 1391; sequence DKEEEEERLR…DEDGWTTVRR (583 aa). 2 consecutive repeat copies span residues 973–982 and 983–992. Residues 973–1229 are 26 X 10 AA approximate tandem repeats of [DE]-[DE]-[DE]-R-[GATV]-[PS]-[KRW]-R-G-[AEFGIL]; the sequence is DEDRGPKRGL…DDDRGPRRGE (257 aa). The stretch at 993-1001 is one 3; approximate repeat; the sequence is DDAGPRRGF. 20 tandem repeats follow at residues 1002–1011, 1012–1021, 1022–1031, 1032–1041, 1042–1051, 1052–1061, 1062–1071, 1072–1081, 1082–1091, 1092–1101, 1102–1111, 1112–1120, 1122–1131, 1132–1141, 1142–1151, 1152–1161, 1162–1171, 1172–1181, 1182–1191, and 1192–1201. Residues 1202 to 1209 form a 24; approximate repeat; that stretch reads DDVPRRGA. 2 consecutive repeat copies span residues 1210–1219 and 1220–1229.

It belongs to the eIF-3 subunit A family. In terms of assembly, component of the eukaryotic translation initiation factor 3 (eIF-3) complex, which is composed of 13 subunits: eif3a, eif3b, eif3c, eif3d, eif3e, eif3f, eif3g, eif3h, eif3i, eif3j, eif3k, eif3l and eif3m.

The protein localises to the cytoplasm. Its function is as follows. RNA-binding component of the eukaryotic translation initiation factor 3 (eIF-3) complex, which is involved in protein synthesis of a specialized repertoire of mRNAs and, together with other initiation factors, stimulates binding of mRNA and methionyl-tRNAi to the 40S ribosome. The eIF-3 complex specifically targets and initiates translation of a subset of mRNAs involved in cell proliferation. In Xenopus tropicalis (Western clawed frog), this protein is Eukaryotic translation initiation factor 3 subunit A (eif3a).